A 383-amino-acid polypeptide reads, in one-letter code: Pentatricopeptide repeat-containing protein 2, mitochondrial (383 aa).

The stretch at 161–195 (TSFNILMDMLFIKGKYKSALEVLIEMKNQNVKFTT) is one PPR repeat. A Phosphoserine modification is found at Ser377.

The protein belongs to the PTCD2 family.

The protein localises to the mitochondrion. Its function is as follows. Involved in mitochondrial RNA maturation and mitochondrial respiratory chain function. The sequence is that of Pentatricopeptide repeat-containing protein 2, mitochondrial (PTCD2) from Pongo abelii (Sumatran orangutan).